Reading from the N-terminus, the 191-residue chain is Holliday junction branch migration complex subunit RuvA (191 aa).

A domain I region spans residues 1–64 (MIGSITGNVE…DNITQLYGFL (64 aa)). The tract at residues 65–142 (NRQEQDYLKM…KMPIEETFSI (78 aa)) is domain II. Residues 143-146 (IEND) are flexible linker. Positions 146 to 191 (DDSLAALISLGYEKLKAFNVIQEIKSKTPDASTQEVIRKALQKLSQ) are domain III.

It belongs to the RuvA family. In terms of assembly, homotetramer. Forms an RuvA(8)-RuvB(12)-Holliday junction (HJ) complex. HJ DNA is sandwiched between 2 RuvA tetramers; dsDNA enters through RuvA and exits via RuvB. An RuvB hexamer assembles on each DNA strand where it exits the tetramer. Each RuvB hexamer is contacted by two RuvA subunits (via domain III) on 2 adjacent RuvB subunits; this complex drives branch migration. In the full resolvosome a probable DNA-RuvA(4)-RuvB(12)-RuvC(2) complex forms which resolves the HJ.

It is found in the cytoplasm. The RuvA-RuvB-RuvC complex processes Holliday junction (HJ) DNA during genetic recombination and DNA repair, while the RuvA-RuvB complex plays an important role in the rescue of blocked DNA replication forks via replication fork reversal (RFR). RuvA specifically binds to HJ cruciform DNA, conferring on it an open structure. The RuvB hexamer acts as an ATP-dependent pump, pulling dsDNA into and through the RuvAB complex. HJ branch migration allows RuvC to scan DNA until it finds its consensus sequence, where it cleaves and resolves the cruciform DNA. The chain is Holliday junction branch migration complex subunit RuvA from Ehrlichia ruminantium (strain Welgevonden).